Consider the following 344-residue polypeptide: Pyruvate dehydrogenase E1 component subunit alpha (344 aa).

Pyruvate contacts are provided by histidine 55, tyrosine 81, arginine 82, alanine 130, isoleucine 132, aspartate 168, glycine 169, and asparagine 197. Tyrosine 81, arginine 82, alanine 130, isoleucine 132, aspartate 168, glycine 169, asparagine 197, and histidine 266 together coordinate thiamine diphosphate. Aspartate 168 serves as a coordination point for Mg(2+). Asparagine 197 serves as a coordination point for Mg(2+).

As to quaternary structure, heterodimer of an alpha and a beta chain. It depends on thiamine diphosphate as a cofactor. Mg(2+) is required as a cofactor.

It localises to the plastid. Its subcellular location is the chloroplast. The enzyme catalyses N(6)-[(R)-lipoyl]-L-lysyl-[protein] + pyruvate + H(+) = N(6)-[(R)-S(8)-acetyldihydrolipoyl]-L-lysyl-[protein] + CO2. The pyruvate dehydrogenase complex catalyzes the overall conversion of pyruvate to acetyl-CoA and CO(2). It contains multiple copies of three enzymatic components: pyruvate dehydrogenase (E1), dihydrolipoamide acetyltransferase (E2) and lipoamide dehydrogenase (E3). This is Pyruvate dehydrogenase E1 component subunit alpha (pdhA) from Porphyra purpurea (Red seaweed).